Here is a 619-residue protein sequence, read N- to C-terminus: uncharacterized protein (619 aa).

An N-terminal signal peptide occupies residues 1 to 21 (MKKLIAIIAVAAVVIAGFVFT).

This is an uncharacterized protein from Archaeoglobus fulgidus (strain ATCC 49558 / DSM 4304 / JCM 9628 / NBRC 100126 / VC-16).